Here is a 302-residue protein sequence, read N- to C-terminus: tRNA dimethylallyltransferase (302 aa).

10-17 (GPTAIGKT) is an ATP binding site. 12–17 (TAIGKT) contacts substrate. An interaction with substrate tRNA region spans residues 35–38 (DSRQ).

It belongs to the IPP transferase family. As to quaternary structure, monomer. Requires Mg(2+) as cofactor.

It catalyses the reaction adenosine(37) in tRNA + dimethylallyl diphosphate = N(6)-dimethylallyladenosine(37) in tRNA + diphosphate. In terms of biological role, catalyzes the transfer of a dimethylallyl group onto the adenine at position 37 in tRNAs that read codons beginning with uridine, leading to the formation of N6-(dimethylallyl)adenosine (i(6)A). The chain is tRNA dimethylallyltransferase from Christiangramia forsetii (strain DSM 17595 / CGMCC 1.15422 / KT0803) (Gramella forsetii).